The primary structure comprises 73 residues: Photosystem I reaction center subunit IV (73 aa).

Belongs to the PsaE family.

The protein resides in the cellular thylakoid membrane. Functionally, stabilizes the interaction between PsaC and the PSI core, assists the docking of the ferredoxin to PSI and interacts with ferredoxin-NADP oxidoreductase. This Synechococcus sp. (strain JA-3-3Ab) (Cyanobacteria bacterium Yellowstone A-Prime) protein is Photosystem I reaction center subunit IV.